Here is a 136-residue protein sequence, read N- to C-terminus: Ribonuclease P protein component (136 aa).

Positions 39 to 59 are disordered; sequence LPDVSSSKPARDTGAEQTSAP.

This sequence belongs to the RnpA family. As to quaternary structure, consists of a catalytic RNA component (M1 or rnpB) and a protein subunit.

The catalysed reaction is Endonucleolytic cleavage of RNA, removing 5'-extranucleotides from tRNA precursor.. RNaseP catalyzes the removal of the 5'-leader sequence from pre-tRNA to produce the mature 5'-terminus. It can also cleave other RNA substrates such as 4.5S RNA. The protein component plays an auxiliary but essential role in vivo by binding to the 5'-leader sequence and broadening the substrate specificity of the ribozyme. In Salinispora tropica (strain ATCC BAA-916 / DSM 44818 / JCM 13857 / NBRC 105044 / CNB-440), this protein is Ribonuclease P protein component.